The chain runs to 257 residues: Protein YIPF5 (257 aa).

Topologically, residues methionine 1–glutamate 124 are cytoplasmic. The interval proline 75–lysine 106 is interaction with Sec23. The helical transmembrane segment at threonine 125–glycine 145 threads the bilayer. Position 146 (lysine 146) is a topological domain, lumenal. The helical transmembrane segment at isoleucine 147–leucine 167 threads the bilayer. Over asparagine 168–threonine 173 the chain is Cytoplasmic. Residues glycine 174–leucine 194 traverse the membrane as a helical segment. The Lumenal portion of the chain corresponds to serine 195–serine 196. The chain crosses the membrane as a helical span at residues phenylalanine 197–glycine 217. At tryptophan 218–glutamine 236 the chain is on the cytoplasmic side. Residues glutamine 237–phenylalanine 257 traverse the membrane as a helical segment.

This sequence belongs to the YIP1 family. Interacts with the COPII coat components Sec23 (SEC23A and/or SEC23B) and Sec24 (SEC24A and/or SEC24B). Interacts with YIF1A. May interact with RAB1A. Interacts with YIPF3 and YIPF4. As to expression, ubiquitously expressed with abundant expression in pancreatic tissue, islets, beta cells, and brain. Highly expressed in coronary smooth muscles.

The protein localises to the endoplasmic reticulum membrane. The protein resides in the golgi apparatus. It is found in the cis-Golgi network membrane. It localises to the cytoplasmic vesicle. Its subcellular location is the COPII-coated vesicle. In terms of biological role, plays a role in transport between endoplasmic reticulum and Golgi. In pancreatic beta cells, required to transport proinsulin from endoplasmic reticulum into the Golgi. The sequence is that of Protein YIPF5 from Homo sapiens (Human).